A 309-amino-acid polypeptide reads, in one-letter code: HPr kinase/phosphorylase (309 aa).

Active-site residues include His-138 and Lys-159. 153–160 (GQSGVGKS) contributes to the ATP binding site. Ser-160 is a binding site for Mg(2+). The Proton acceptor; for phosphorylation activity. Proton donor; for dephosphorylation activity role is filled by Asp-177. The segment at 201 to 210 (LEIRGLGIIN) is important for the catalytic mechanism of both phosphorylation and dephosphorylation. Glu-202 contacts Mg(2+). Residue Arg-243 is part of the active site. Residues 264–269 (PVRPGR) form an important for the catalytic mechanism of dephosphorylation region.

It belongs to the HPrK/P family. In terms of assembly, homohexamer. Mg(2+) serves as cofactor.

The catalysed reaction is [HPr protein]-L-serine + ATP = [HPr protein]-O-phospho-L-serine + ADP + H(+). It carries out the reaction [HPr protein]-O-phospho-L-serine + phosphate + H(+) = [HPr protein]-L-serine + diphosphate. Its function is as follows. Catalyzes the ATP- as well as the pyrophosphate-dependent phosphorylation of a specific serine residue in HPr, a phosphocarrier protein of the phosphoenolpyruvate-dependent sugar phosphotransferase system (PTS). HprK/P also catalyzes the pyrophosphate-producing, inorganic phosphate-dependent dephosphorylation (phosphorolysis) of seryl-phosphorylated HPr (P-Ser-HPr). The two antagonistic activities of HprK/P are regulated by several intracellular metabolites, which change their concentration in response to the absence or presence of rapidly metabolisable carbon sources (glucose, fructose, etc.) in the growth medium. Also phosphorylates/dephosphorylates the HPr-like catabolite repression protein crh on a specific serine residue. Therefore, by controlling the phosphorylation state of HPr and crh, HPrK/P is a sensor enzyme that plays a major role in the regulation of carbon metabolism and sugar transport: it mediates carbon catabolite repression (CCR), and regulates PTS-catalyzed carbohydrate uptake and inducer exclusion. The sequence is that of HPr kinase/phosphorylase from Bacillus cereus (strain B4264).